Consider the following 118-residue polypeptide: Thioredoxin H5 (118 aa).

Ala2 is subject to N-acetylalanine. Positions 2 to 113 (AGEGEVIACH…INEKLMKHGG (112 aa)) constitute a Thioredoxin domain. Catalysis depends on nucleophile residues Cys39 and Cys42. Cysteines 39 and 42 form a disulfide.

This sequence belongs to the thioredoxin family. Plant H-type subfamily. In terms of assembly, interacts with MDH1.

It is found in the cytoplasm. Its function is as follows. Thiol-disulfide oxidoreductase involved in response to pathogens and oxidative stresses. Required for the response to victorin, a phytotoxin which induces programmed cell death in sensitive plants. Possesses insulin disulfide bonds reducing activity. The sequence is that of Thioredoxin H5 (TRX5) from Arabidopsis thaliana (Mouse-ear cress).